We begin with the raw amino-acid sequence, 335 residues long: Protein-arginine kinase (335 aa).

The 224-residue stretch at 21–244 folds into the Phosphagen kinase C-terminal domain; sequence VIISSRIRLA…NQIINEEKQI (224 aa). ATP-binding positions include 24 to 28, His82, Arg115, 166 to 170, and 197 to 202; these read SSRIR, RASVM, and RGIYGE.

It belongs to the ATP:guanido phosphotransferase family.

The catalysed reaction is L-arginyl-[protein] + ATP = N(omega)-phospho-L-arginyl-[protein] + ADP + H(+). In terms of biological role, catalyzes the specific phosphorylation of arginine residues in proteins. This Staphylococcus epidermidis (strain ATCC 12228 / FDA PCI 1200) protein is Protein-arginine kinase.